Consider the following 352-residue polypeptide: MEGISIYTSDNYTEEMGSGDYDSIKEPCFREENAHFNRIFLPTIYSIIFLTGIVGNGLVILVMGYQKKLRSMTDKYRLHLSVADLLFVITLPFWAVDAVANWYFGNFLCKAVHVIYTVNLYSSVLILAFISLDRYLAIVHATNSQKPRKLLAEKVVYVGVWIPALLLTIPDFIFASVSEADDRYICDRFYPNDLWVVVFQFQHIMVGLILPGIDILSCYCIIISKLSHSKGHQKRKALKTTVILILAFFACWLPYYIGISIDSFILLEIIKQGCEFENTVHKWISITEALAFFHCCLNPILYAFLGAKFKTSAQHALTSVSRGSSLKILSKGKRGGHSSVSTESESSSFHSS.

The important for chemokine binding and signaling stretch occupies residues 1–21 (MEGISIYTSDNYTEEMGSGDY). Residues 1–38 (MEGISIYTSDNYTEEMGSGDYDSIKEPCFREENAHFNR) lie on the Extracellular side of the membrane. Sulfotyrosine is present on Tyr-7. Asn-11 carries N-linked (GlcNAc...) asparagine glycosylation. Tyr-12 is subject to Sulfotyrosine. Ser-18 is a glycosylation site (O-linked (Xyl...) (chondroitin sulfate) serine). Tyr-21 carries the sulfotyrosine modification. 2 cysteine pairs are disulfide-bonded: Cys-28–Cys-274 and Cys-109–Cys-186. A helical membrane pass occupies residues 39-63 (IFLPTIYSIIFLTGIVGNGLVILVM). Topologically, residues 64 to 77 (GYQKKLRSMTDKYR) are cytoplasmic. A helical membrane pass occupies residues 78 to 99 (LHLSVADLLFVITLPFWAVDAV). The tract at residues 94–97 (WAVD) is chemokine binding. Residues 100 to 110 (ANWYFGNFLCK) are Extracellular-facing. A helical transmembrane segment spans residues 111-130 (AVHVIYTVNLYSSVLILAFI). The interval 113 to 117 (HVIYT) is chemokine binding. At 131-154 (SLDRYLAIVHATNSQKPRKLLAEK) the chain is on the cytoplasmic side. The Important for signaling signature appears at 133–135 (DRY). The segment at 135-147 (YLAIVHATNSQKP) is involved in dimerization; when bound to chemokine. The helical transmembrane segment at 155-174 (VVYVGVWIPALLLTIPDFIF) threads the bilayer. Residues 175–195 (ASVSEADDRYICDRFYPNDLW) lie on the Extracellular side of the membrane. The tract at residues 186–190 (CDRFY) is chemokine binding, important for signaling. The interval 191–210 (PNDLWVVVFQFQHIMVGLIL) is involved in dimerization. Residues 196–216 (VVVFQFQHIMVGLILPGIDIL) form a helical membrane-spanning segment. Residues 217-241 (SCYCIIISKLSHSKGHQKRKALKTT) are Cytoplasmic-facing. The chain crosses the membrane as a helical span at residues 242–261 (VILILAFFACWLPYYIGISI). Topologically, residues 262–282 (DSFILLEIIKQGCEFENTVHK) are extracellular. The segment at 266-268 (LLE) is involved in dimerization. The chain crosses the membrane as a helical span at residues 283 to 302 (WISITEALAFFHCCLNPILY). Residues 303-352 (AFLGAKFKTSAQHALTSVSRGSSLKILSKGKRGGHSSVSTESESSSFHSS) lie on the Cytoplasmic side of the membrane. A phosphoserine mark is found at Ser-319 and Ser-321. Phosphoserine; by PKC and GRK6 occurs at positions 324 and 325. The interval 329-352 (LSKGKRGGHSSVSTESESSSFHSS) is disordered. A Phosphoserine; by GRK6 modification is found at Ser-330. A Glycyl lysine isopeptide (Lys-Gly) (interchain with G-Cter in ubiquitin) cross-link involves residue Lys-331. Positions 337-352 (HSSVSTESESSSFHSS) are enriched in low complexity. Ser-339 carries the post-translational modification Phosphoserine; by GRK6. Residues Ser-348 and Ser-351 each carry the phosphoserine modification.

The protein belongs to the G-protein coupled receptor 1 family. In terms of assembly, monomer. Can form homodimers. Interacts with CD164. Interacts with ARRB2; the interaction is dependent on the C-terminal phosphorylation of CXCR4 and allows activation of MAPK1 and MAPK3. Interacts with ARR3; the interaction is dependent on the C-terminal phosphorylation of CXCR4 and modulates calcium mobilization. Interacts with RNF113A; the interaction, enhanced by CXCL12, promotes CXCR4 ubiquitination and subsequent degradation. Interacts (via the cytoplasmic C-terminal) with ITCH (via the WW domains I and II); the interaction, enhanced by CXCL12, promotes CXCR4 ubiquitination and leads to its degradation. Interacts with extracellular ubiquitin. Interacts with DBN1; this interaction is enhanced by antigenic stimulation. Following LPS binding, may form a complex with GDF5, HSP90AA1 and HSPA8. In terms of processing, phosphorylated on agonist stimulation. Rapidly phosphorylated on serine and threonine residues in the C-terminal. Phosphorylation at Ser-324 and Ser-325 leads to recruitment of ITCH, ubiquitination and protein degradation. Ubiquitinated after ligand binding, leading to its degradation. Ubiquitinated by ITCH at the cell membrane on agonist stimulation. The ubiquitin-dependent mechanism, endosomal sorting complex required for transport (ESCRT), then targets CXCR4 for lysosomal degradation. This process is dependent also on prior Ser-/Thr-phosphorylation in the C-terminal of CXCR4. Also binding of ARRB1 to STAM negatively regulates CXCR4 sorting to lysosomes though modulating ubiquitination of SFR5S. Post-translationally, sulfation is required for efficient binding of CXCL12/SDF-1alpha and promotes its dimerization. In terms of processing, O- and N-glycosylated. N-glycosylation can mask coreceptor function. The O-glycosylation chondroitin sulfate attachment does not affect interaction with CXCL12/SDF-1alpha nor its coreceptor activity.

The protein resides in the cell membrane. The protein localises to the cell junction. Its subcellular location is the early endosome. It is found in the late endosome. It localises to the lysosome. Receptor for the C-X-C chemokine CXCL12/SDF-1 that transduces a signal by increasing intracellular calcium ion levels and enhancing MAPK1/MAPK3 activation. Involved in the AKT signaling cascade. Plays a role in regulation of cell migration, e.g. during wound healing. Acts as a receptor for extracellular ubiquitin; leading to enhanced intracellular calcium ions and reduced cellular cAMP levels. Binds bacterial lipopolysaccharide (LPS) et mediates LPS-induced inflammatory response, including TNF secretion by monocytes. Involved in hematopoiesis and in cardiac ventricular septum formation. Also plays an essential role in vascularization of the gastrointestinal tract, probably by regulating vascular branching and/or remodeling processes in endothelial cells. Involved in cerebellar development. In the CNS, could mediate hippocampal-neuron survival. This chain is C-X-C chemokine receptor type 4 (CXCR4), found in Macaca mulatta (Rhesus macaque).